A 448-amino-acid chain; its full sequence is 26S proteasome regulatory subunit 4 homolog (448 aa).

A compositionally biased stretch (gly residues) spans 1 to 16 (MGQGTPGGMGKQGGAP). Disordered stretches follow at residues 1 to 56 (MGQG…AAAR) and 93 to 112 (LRPT…DLRG). Basic and acidic residues-rich tracts occupy residues 17–33 (GDRK…RKFE) and 93–111 (LRPT…DDLR). An ATP-binding site is contributed by 234–241 (GEPGTGKT).

Belongs to the AAA ATPase family.

It localises to the cytoplasm. Its subcellular location is the nucleus. Functionally, the 26S proteasome is involved in the ATP-dependent degradation of ubiquitinated proteins. The regulatory (or ATPase) complex confers ATP dependency and substrate specificity to the 26S complex. The protein is 26S proteasome regulatory subunit 4 homolog (TBP2) of Oryza sativa subsp. japonica (Rice).